Consider the following 353-residue polypeptide: Uroporphyrinogen decarboxylase (353 aa).

Substrate contacts are provided by residues 27–31, F46, D76, Y152, S207, and H321; that span reads RQAGR.

This sequence belongs to the uroporphyrinogen decarboxylase family. Homodimer.

It localises to the cytoplasm. It carries out the reaction uroporphyrinogen III + 4 H(+) = coproporphyrinogen III + 4 CO2. It participates in porphyrin-containing compound metabolism; protoporphyrin-IX biosynthesis; coproporphyrinogen-III from 5-aminolevulinate: step 4/4. In terms of biological role, catalyzes the decarboxylation of four acetate groups of uroporphyrinogen-III to yield coproporphyrinogen-III. This Listeria monocytogenes serovar 1/2a (strain ATCC BAA-679 / EGD-e) protein is Uroporphyrinogen decarboxylase.